The following is a 199-amino-acid chain: Large ribosomal subunit protein uL4 (199 aa).

Belongs to the universal ribosomal protein uL4 family. In terms of assembly, part of the 50S ribosomal subunit.

Functionally, one of the primary rRNA binding proteins, this protein initially binds near the 5'-end of the 23S rRNA. It is important during the early stages of 50S assembly. It makes multiple contacts with different domains of the 23S rRNA in the assembled 50S subunit and ribosome. In terms of biological role, forms part of the polypeptide exit tunnel. This Aquifex pyrophilus protein is Large ribosomal subunit protein uL4.